Consider the following 1488-residue polypeptide: WD repeat-containing protein 7 (1488 aa).

WD repeat units lie at residues 17–56, 62–104, 156–199, 324–366, 404–443, 462–507, and 558–597; these read APTH…EVNP, GHTA…CIEF, ISPD…SGLQ, VICP…DKQE, NEPL…IVQL, GHRN…MKHI, and RHLF…LDRC. Disordered stretches follow at residues 761–781 and 911–947; these read EEED…PEYR and GDHM…QGQI. A compositionally biased stretch (basic and acidic residues) spans 768–781; that stretch reads VMRQRREESDPEYR. Phosphoserine is present on Ser935. Residues 937-947 are compositionally biased toward polar residues; sequence PASSNIVQGQI. 2 WD repeats span residues 1349–1388 and 1390–1430; these read PAIC…CQTI and GHKG…LGSI. Phosphoserine is present on Ser1454.

This chain is WD repeat-containing protein 7 (Wdr7), found in Rattus norvegicus (Rat).